Consider the following 652-residue polypeptide: DNA ligase (652 aa).

NAD(+) is bound by residues 29 to 33 (DSDYD), 78 to 79 (SL), and E107. K109 functions as the N6-AMP-lysine intermediate in the catalytic mechanism. The NAD(+) site is built by R130, E164, K278, and K302. Zn(2+) contacts are provided by C395, C398, C413, and C418. Residues 577-652 (NSDAALFGLT…IEDEDWLRKF (76 aa)) enclose the BRCT domain.

It belongs to the NAD-dependent DNA ligase family. LigA subfamily. It depends on Mg(2+) as a cofactor. Mn(2+) is required as a cofactor.

It catalyses the reaction NAD(+) + (deoxyribonucleotide)n-3'-hydroxyl + 5'-phospho-(deoxyribonucleotide)m = (deoxyribonucleotide)n+m + AMP + beta-nicotinamide D-nucleotide.. In terms of biological role, DNA ligase that catalyzes the formation of phosphodiester linkages between 5'-phosphoryl and 3'-hydroxyl groups in double-stranded DNA using NAD as a coenzyme and as the energy source for the reaction. It is essential for DNA replication and repair of damaged DNA. The protein is DNA ligase of Streptococcus pyogenes serotype M6 (strain ATCC BAA-946 / MGAS10394).